The chain runs to 475 residues: Ribulose bisphosphate carboxylase large chain (475 aa).

Positions 1-2 (MS) are excised as a propeptide. Pro-3 bears the N-acetylproline mark. The residue at position 14 (Lys-14) is an N6,N6,N6-trimethyllysine. The substrate site is built by Asn-123 and Thr-173. Lys-175 acts as the Proton acceptor in catalysis. Lys-177 serves as a coordination point for substrate. Lys-201, Asp-203, and Glu-204 together coordinate Mg(2+). The residue at position 201 (Lys-201) is an N6-carboxylysine. Catalysis depends on His-294, which acts as the Proton acceptor. The substrate site is built by Arg-295, His-327, and Ser-379.

This sequence belongs to the RuBisCO large chain family. Type I subfamily. In terms of assembly, heterohexadecamer of 8 large chains and 8 small chains. Requires Mg(2+) as cofactor.

It is found in the plastid. Its subcellular location is the chloroplast. The catalysed reaction is 2 (2R)-3-phosphoglycerate + 2 H(+) = D-ribulose 1,5-bisphosphate + CO2 + H2O. It catalyses the reaction D-ribulose 1,5-bisphosphate + O2 = 2-phosphoglycolate + (2R)-3-phosphoglycerate + 2 H(+). Its function is as follows. RuBisCO catalyzes two reactions: the carboxylation of D-ribulose 1,5-bisphosphate, the primary event in carbon dioxide fixation, as well as the oxidative fragmentation of the pentose substrate in the photorespiration process. Both reactions occur simultaneously and in competition at the same active site. The chain is Ribulose bisphosphate carboxylase large chain from Nymphaea alba (White water-lily).